The sequence spans 204 residues: MAETARTAPAVDFVGGAVGYRFRSQAGRSHALLKATGLSPTRSLHVIDATAGLGRDAFLLASMGATVTLIERVPEVHALLAEALEAARAESDELAAIIGRMTLLHGDARVLLPTLQADVITIDPMHPPRTKTALVKQEMRLLRDLVGADPDVGELLAAALSADCGRVVLKWPLRAAAPPAARKPSHQIAGKTVRYDVYVRPRTT.

S-adenosyl-L-methionine contacts are provided by residues 55–56 (RD), 71–72 (ER), and Asp-123.

The protein belongs to the methyltransferase superfamily. RsmJ family.

Its subcellular location is the cytoplasm. The enzyme catalyses guanosine(1516) in 16S rRNA + S-adenosyl-L-methionine = N(2)-methylguanosine(1516) in 16S rRNA + S-adenosyl-L-homocysteine + H(+). Functionally, specifically methylates the guanosine in position 1516 of 16S rRNA. The chain is Ribosomal RNA small subunit methyltransferase J from Rhodopseudomonas palustris (strain ATCC BAA-98 / CGA009).